The sequence spans 2150 residues: Genome polyprotein (2150 aa).

A lipid anchor (N-myristoyl glycine; by host) is attached at Gly-2. The Cytoplasmic segment spans residues 2-1463; it reads GAQVSRQNVG…ELNLANTIIT (1462 aa). Residues 565 to 581 form an amphipathic alpha-helix region; that stretch reads IAQNPVENYIDEVLNEV. The tract at residues 592 to 611 is disordered; the sequence is PTTSNSAPALDAAETGHTSS. Active-site for protease 2A activity residues include His-868 and Asp-885. Residues Cys-902 and Cys-904 each coordinate Zn(2+). The active-site For protease 2A activity is Cys-956. Zn(2+)-binding residues include Cys-962 and His-964. The membrane-binding stretch occupies residues 1088–1157; the sequence is SDSWLKKFTE…SLRVADMKTQ (70 aa). The interval 1088-1221 is oligomerization; sequence SDSWLKKFTE…PPGAGKSITT (134 aa). The tract at residues 1109-1113 is RNA-binding; the sequence is GNKIS. Positions 1181–1343 constitute an SF3 helicase domain; sequence EAKRIKTLYI…FKDPQGKLNV (163 aa). Zn(2+) is bound by residues Cys-1350, Cys-1361, and Cys-1366. The segment at 1350–1366 adopts a C4-type; degenerate zinc-finger fold; the sequence is CDVDNRIGNARCCPFVC. An RNA-binding region spans residues 1393 to 1400; the sequence is EDRRRRQV. The interval 1404–1409 is oligomerization; it reads MTAIFQ. The stretch at 1464-1479 is an intramembrane region; it reads IIANVIGMARIIYVIY. At 1480–2150 the chain is on the cytoplasmic side; it reads KLFCTLQGPY…LLLHEWYEKF (671 aa). Tyr-1489 carries the O-(5'-phospho-RNA)-tyrosine modification. The region spanning 1508 to 1686 is the Peptidase C3 domain; sequence GPEEEFGMSL…FSAMLLRSYF (179 aa). Catalysis depends on for protease 3C activity residues His-1547, Glu-1578, and Cys-1654. In terms of domain architecture, RdRp catalytic spans 1918–2031; it reads KCIMAFDYTN…SYIHELDMEA (114 aa). Asp-1924 and Asp-2017 together coordinate Mg(2+).

Belongs to the picornaviruses polyprotein family. As to quaternary structure, interacts with capsid protein VP1 and capsid protein VP3 to form heterotrimeric protomers. Interacts with capsid protein VP0, and capsid protein VP3 to form heterotrimeric protomers. Five protomers subsequently associate to form pentamers which serve as building blocks for the capsid. Interacts with capsid protein VP2, capsid protein VP3 and capsid protein VP4 following cleavage of capsid protein VP0. In terms of assembly, interacts with capsid protein VP1 and capsid protein VP3 in the mature capsid. As to quaternary structure, interacts with capsid protein VP0 and capsid protein VP1 to form heterotrimeric protomers. Five protomers subsequently associate to form pentamers which serve as building blocks for the capsid. Interacts with capsid protein VP4 in the mature capsid. Interacts with protein 2C; this interaction may be important for virion morphogenesis. Interacts with capsid protein VP1 and capsid protein VP3. In terms of assembly, homodimer. As to quaternary structure, homohexamer; forms a hexameric ring structure with 6-fold symmetry characteristic of AAA+ ATPases. Interacts (via N-terminus) with host RTN3 (via reticulon domain); this interaction is important for viral replication. Interacts with capsid protein VP3; this interaction may be important for virion morphogenesis. Interacts with protein 3CD. In terms of assembly, homodimer. Interacts with host GBF1. Interacts (via GOLD domain) with host ACBD3 (via GOLD domain); this interaction allows the formation of a viral protein 3A/ACBD3 heterotetramer with a 2:2 stoichiometry, which will stimulate the recruitment of host PI4KB in order to synthesize PI4P at the viral RNA replication sites. As to quaternary structure, interacts with RNA-directed RNA polymerase. Interacts with protein 3AB and with RNA-directed RNA polymerase. In terms of assembly, interacts with Viral protein genome-linked and with protein 3CD. The cofactor is Mg(2+). Post-translationally, specific enzymatic cleavages in vivo by the viral proteases yield processing intermediates and the mature proteins. Myristoylation is required for the formation of pentamers during virus assembly. Further assembly of 12 pentamers and a molecule of genomic RNA generates the provirion. In terms of processing, during virion maturation, immature virions are rendered infectious following cleavage of VP0 into VP4 and VP2. This maturation seems to be an autocatalytic event triggered by the presence of RNA in the capsid and it is followed by a conformational change infectious virion. Post-translationally, myristoylation is required during RNA encapsidation and formation of the mature virus particle. VPg is uridylylated by the polymerase into VPg-pUpU. This acts as a nucleotide-peptide primer for the genomic RNA replication.

The protein resides in the virion. Its subcellular location is the host cytoplasm. It is found in the host cytoplasmic vesicle membrane. It localises to the host nucleus. It carries out the reaction a ribonucleoside 5'-triphosphate + H2O = a ribonucleoside 5'-diphosphate + phosphate + H(+). It catalyses the reaction Selective cleavage of Tyr-|-Gly bond in the picornavirus polyprotein.. The enzyme catalyses RNA(n) + a ribonucleoside 5'-triphosphate = RNA(n+1) + diphosphate. The catalysed reaction is Selective cleavage of Gln-|-Gly bond in the poliovirus polyprotein. In other picornavirus reactions Glu may be substituted for Gln, and Ser or Thr for Gly.. With respect to regulation, replication or transcription is subject to high level of random mutations by the nucleotide analog ribavirin. Its function is as follows. Forms an icosahedral capsid of pseudo T=3 symmetry with capsid proteins VP2 and VP3. The capsid is 300 Angstroms in diameter, composed of 60 copies of each capsid protein and enclosing the viral positive strand RNA genome. Capsid protein VP1 mainly forms the vertices of the capsid. Capsid protein VP1 interacts with host cell receptor to provide virion attachment to target host cells. This attachment induces virion internalization. Tyrosine kinases are probably involved in the entry process. After binding to its receptor, the capsid undergoes conformational changes. Capsid protein VP1 N-terminus (that contains an amphipathic alpha-helix) and capsid protein VP4 are externalized. Together, they shape a pore in the host membrane through which viral genome is translocated to host cell cytoplasm. Forms an icosahedral capsid of pseudo T=3 symmetry with capsid proteins VP2 and VP3. The capsid is 300 Angstroms in diameter, composed of 60 copies of each capsid protein and enclosing the viral positive strand RNA genome. Functionally, lies on the inner surface of the capsid shell. After binding to the host receptor, the capsid undergoes conformational changes. Capsid protein VP4 is released, Capsid protein VP1 N-terminus is externalized, and together, they shape a pore in the host membrane through which the viral genome is translocated into the host cell cytoplasm. In terms of biological role, component of immature procapsids, which is cleaved into capsid proteins VP4 and VP2 after maturation. Allows the capsid to remain inactive before the maturation step. Its function is as follows. Cysteine protease that cleaves viral polyprotein and specific host proteins. It is responsible for the autocatalytic cleavage between the P1 and P2 regions, which is the first cleavage occurring in the polyprotein. Also cleaves the host translation initiation factor EIF4G1, in order to shut down the capped cellular mRNA translation. Inhibits the host nucleus-cytoplasm protein and RNA trafficking by cleaving host members of the nuclear pores. Counteracts stress granule formation probably by antagonizing its assembly or promoting its dissassembly. Plays an essential role in the virus replication cycle by acting as a viroporin. Creates a pore in the host endoplasmic reticulum and as a consequence releases Ca2+ in the cytoplasm of infected cell. In turn, high levels of cytoplasmic calcium may trigger membrane trafficking and transport of viral ER-associated proteins to viroplasms, sites of viral genome replication. Functionally, induces and associates with structural rearrangements of intracellular membranes. Displays RNA-binding, nucleotide binding and NTPase activities. May play a role in virion morphogenesis and viral RNA encapsidation by interacting with the capsid protein VP3. In terms of biological role, localizes the viral replication complex to the surface of membranous vesicles. Together with protein 3CD binds the Cis-Active RNA Element (CRE) which is involved in RNA synthesis initiation. Acts as a cofactor to stimulate the activity of 3D polymerase, maybe through a nucleid acid chaperone activity. Its function is as follows. Localizes the viral replication complex to the surface of membranous vesicles. It inhibits host cell endoplasmic reticulum-to-Golgi apparatus transport and causes the disassembly of the Golgi complex, possibly through GBF1 interaction. This would result in depletion of MHC, trail receptors and IFN receptors at the host cell surface. Plays an essential role in viral RNA replication by recruiting ACBD3 and PI4KB at the viral replication sites, thereby allowing the formation of the rearranged membranous structures where viral replication takes place. Acts as a primer for viral RNA replication and remains covalently bound to viral genomic RNA. VPg is uridylylated prior to priming replication into VPg-pUpU. The oriI viral genomic sequence may act as a template for this. The VPg-pUpU is then used as primer on the genomic RNA poly(A) by the RNA-dependent RNA polymerase to replicate the viral genome. During genome replication, the VPg-RNA linkage is removed by the host TDP2, thereby accelerating replication. During the late stage of the replication cycle, host TDP2 is excluded from sites of viral RNA synthesis and encapsidation, allowing for the generation of progeny virions. Functionally, involved in the viral replication complex and viral polypeptide maturation. It exhibits protease activity with a specificity and catalytic efficiency that is different from protease 3C. Protein 3CD lacks polymerase activity. Protein 3CD binds to the 5'UTR of the viral genome. In terms of biological role, replicates the viral genomic RNA on the surface of intracellular membranes. May form linear arrays of subunits that propagate along a strong head-to-tail interaction called interface-I. Covalently attaches UMP to a tyrosine of VPg, which is used to prime RNA synthesis. The positive stranded RNA genome is first replicated at virus induced membranous vesicles, creating a dsRNA genomic replication form. This dsRNA is then used as template to synthesize positive stranded RNA genomes. ss(+)RNA genomes are either translated, replicated or encapsidated. Its function is as follows. Major viral protease that mediates proteolytic processing of the polyprotein. Cleaves host EIF5B, contributing to host translation shutoff. Also cleaves host PABPC1, contributing to host translation shutoff. Cleaves host NLRP1, triggers host N-glycine-mediated degradation of the autoinhibitory NLRP1 N-terminal fragment. The polypeptide is Genome polyprotein (Homo sapiens (Human)).